The following is a 394-amino-acid chain: Flagellin A (394 aa).

It belongs to the bacterial flagellin family.

It localises to the secreted. The protein localises to the bacterial flagellum. In terms of biological role, flagellin is the subunit protein which polymerizes to form the filaments of bacterial flagella. Homomer of FlaA is able to form a functional filament. The sequence is that of Flagellin A (flaA) from Rhizobium meliloti (strain 1021) (Ensifer meliloti).